Consider the following 471-residue polypeptide: Argininosuccinate lyase (471 aa).

The protein belongs to the lyase 1 family. Argininosuccinate lyase subfamily.

Its subcellular location is the cytoplasm. The catalysed reaction is 2-(N(omega)-L-arginino)succinate = fumarate + L-arginine. The protein operates within amino-acid biosynthesis; L-arginine biosynthesis; L-arginine from L-ornithine and carbamoyl phosphate: step 3/3. The sequence is that of Argininosuccinate lyase from Cereibacter sphaeroides (strain ATCC 17023 / DSM 158 / JCM 6121 / CCUG 31486 / LMG 2827 / NBRC 12203 / NCIMB 8253 / ATH 2.4.1.) (Rhodobacter sphaeroides).